A 453-amino-acid chain; its full sequence is Chromosomal replication initiator protein DnaA (453 aa).

Positions 1 to 73 (MNISPQYLWN…AQEVASVVGY (73 aa)) are domain I, interacts with DnaA modulators. The tract at residues 73–112 (YPVDIQLTTAEGETMAMTGEAQSYQEKSLTQIAPESPKLN) is domain II. The domain III, AAA+ region stretch occupies residues 113-329 (QLNPRYTFSR…GALIRAIAYT (217 aa)). Residues glycine 157, glycine 159, lysine 160, and threonine 161 each contribute to the ATP site. The tract at residues 330 to 453 (SISGLSMTVQ…RINMASRTQS (124 aa)) is domain IV, binds dsDNA.

The protein belongs to the DnaA family. As to quaternary structure, oligomerizes as a right-handed, spiral filament on DNA at oriC.

The protein localises to the cytoplasm. Its function is as follows. Plays an essential role in the initiation and regulation of chromosomal replication. ATP-DnaA binds to the origin of replication (oriC) to initiate formation of the DNA replication initiation complex once per cell cycle. Binds the DnaA box (a 9 base pair repeat at the origin) and separates the double-stranded (ds)DNA. Forms a right-handed helical filament on oriC DNA; dsDNA binds to the exterior of the filament while single-stranded (ss)DNA is stabiized in the filament's interior. The ATP-DnaA-oriC complex binds and stabilizes one strand of the AT-rich DNA unwinding element (DUE), permitting loading of DNA polymerase. After initiation quickly degrades to an ADP-DnaA complex that is not apt for DNA replication. Binds acidic phospholipids. In Rippkaea orientalis (strain PCC 8801 / RF-1) (Cyanothece sp. (strain PCC 8801)), this protein is Chromosomal replication initiator protein DnaA.